A 462-amino-acid polypeptide reads, in one-letter code: tRNA modification GTPase MnmE (462 aa).

Residues arginine 27, glutamate 89, and arginine 128 each coordinate (6S)-5-formyl-5,6,7,8-tetrahydrofolate. The TrmE-type G domain maps to glycine 224–phenylalanine 383. Asparagine 234 lines the K(+) pocket. GTP is bound by residues asparagine 234–serine 239, threonine 253–threonine 259, and aspartate 278–glycine 281. Serine 238 serves as a coordination point for Mg(2+). Positions 253, 255, and 258 each coordinate K(+). Threonine 259 contributes to the Mg(2+) binding site. Position 462 (lysine 462) interacts with (6S)-5-formyl-5,6,7,8-tetrahydrofolate.

It belongs to the TRAFAC class TrmE-Era-EngA-EngB-Septin-like GTPase superfamily. TrmE GTPase family. As to quaternary structure, homodimer. Heterotetramer of two MnmE and two MnmG subunits. K(+) is required as a cofactor.

It is found in the cytoplasm. Exhibits a very high intrinsic GTPase hydrolysis rate. Involved in the addition of a carboxymethylaminomethyl (cmnm) group at the wobble position (U34) of certain tRNAs, forming tRNA-cmnm(5)s(2)U34. This is tRNA modification GTPase MnmE from Lacticaseibacillus paracasei (strain ATCC 334 / BCRC 17002 / CCUG 31169 / CIP 107868 / KCTC 3260 / NRRL B-441) (Lactobacillus paracasei).